The primary structure comprises 175 residues: ATP-dependent protease subunit HslV (175 aa).

Threonine 2 is a catalytic residue. Na(+)-binding residues include alanine 156, cysteine 159, and threonine 162.

This sequence belongs to the peptidase T1B family. HslV subfamily. A double ring-shaped homohexamer of HslV is capped on each side by a ring-shaped HslU homohexamer. The assembly of the HslU/HslV complex is dependent on binding of ATP.

It localises to the cytoplasm. The enzyme catalyses ATP-dependent cleavage of peptide bonds with broad specificity.. Allosterically activated by HslU binding. In terms of biological role, protease subunit of a proteasome-like degradation complex believed to be a general protein degrading machinery. This is ATP-dependent protease subunit HslV from Rhizobium etli (strain CIAT 652).